The following is a 312-amino-acid chain: Malate dehydrogenase (312 aa).

Residues 12-17 and Asp-36 contribute to the NAD(+) site; that span reads GAGFTG. Positions 87 and 93 each coordinate substrate. NAD(+)-binding positions include Asn-100 and 123 to 125; that span reads LTN. Residue Asn-125 coordinates substrate. At Ser-149 the chain carries Phosphoserine. Arg-156 contacts substrate. Catalysis depends on His-180, which acts as the Proton acceptor.

It belongs to the LDH/MDH superfamily. MDH type 3 family.

It catalyses the reaction (S)-malate + NAD(+) = oxaloacetate + NADH + H(+). Catalyzes the reversible oxidation of malate to oxaloacetate. The protein is Malate dehydrogenase of Geobacillus sp. (strain WCH70).